Here is a 432-residue protein sequence, read N- to C-terminus: Amino-acid acetyltransferase (432 aa).

The N-acetyltransferase domain maps to 286-425; it reads ERVREAAIED…ASLYNYQRNS (140 aa).

This sequence belongs to the acetyltransferase family. ArgA subfamily.

The protein localises to the cytoplasm. The catalysed reaction is L-glutamate + acetyl-CoA = N-acetyl-L-glutamate + CoA + H(+). The protein operates within amino-acid biosynthesis; L-arginine biosynthesis; N(2)-acetyl-L-ornithine from L-glutamate: step 1/4. The sequence is that of Amino-acid acetyltransferase from Pseudomonas fluorescens (strain ATCC BAA-477 / NRRL B-23932 / Pf-5).